A 322-amino-acid polypeptide reads, in one-letter code: tRNA-dihydrouridine synthase B (322 aa).

Residues 16–18 (PMA) and Gln70 each bind FMN. Residue Cys100 is the Proton donor of the active site. FMN is bound by residues Lys139, 200–202 (NGD), and 224–225 (GR).

The protein belongs to the Dus family. DusB subfamily. Requires FMN as cofactor.

The catalysed reaction is a 5,6-dihydrouridine in tRNA + NAD(+) = a uridine in tRNA + NADH + H(+). It carries out the reaction a 5,6-dihydrouridine in tRNA + NADP(+) = a uridine in tRNA + NADPH + H(+). Its function is as follows. Catalyzes the synthesis of 5,6-dihydrouridine (D), a modified base found in the D-loop of most tRNAs, via the reduction of the C5-C6 double bond in target uridines. The chain is tRNA-dihydrouridine synthase B from Vibrio cholerae serotype O1 (strain ATCC 39315 / El Tor Inaba N16961).